The chain runs to 538 residues: Atos homolog protein B (538 aa).

Disordered stretches follow at residues 1-99 (MRHV…PSTV), 165-185 (QGGQ…QLHT), and 199-270 (KSPV…GTLG). Over residues 227 to 238 (HTPPGPGPPGPC) the composition is skewed to pro residues. Phosphoserine is present on residues serine 254 and serine 255. Residues 348 to 430 (LLGNFEESLL…VPKVGTIQVT (83 aa)) form a required for macropage invasion region. Residues 436–444 (QTVVKMFLV) form a transactivation domain 1 (TAD1) region.

It belongs to the ATOS family.

It is found in the nucleus. In terms of biological role, transcription regulator that syncronizes transcriptional and translational programs to promote macrophage invasion of tissues. The polypeptide is Atos homolog protein B (Mus musculus (Mouse)).